Here is a 279-residue protein sequence, read N- to C-terminus: Elongation factor Ts (279 aa).

Residues 80–83 (TDFV) form an involved in Mg(2+) ion dislocation from EF-Tu region.

The protein belongs to the EF-Ts family.

Its subcellular location is the cytoplasm. Functionally, associates with the EF-Tu.GDP complex and induces the exchange of GDP to GTP. It remains bound to the aminoacyl-tRNA.EF-Tu.GTP complex up to the GTP hydrolysis stage on the ribosome. The polypeptide is Elongation factor Ts (tsf) (Borreliella burgdorferi (strain ATCC 35210 / DSM 4680 / CIP 102532 / B31) (Borrelia burgdorferi)).